A 383-amino-acid chain; its full sequence is LIM/homeobox protein Lhx3 (383 aa).

LIM zinc-binding domains are found at residues 14–73 (PLCA…RFGT) and 73–136 (TKCA…AKQR). Threonine 48 bears the Phosphothreonine mark. Serine 56 carries the phosphoserine modification. Positions 142 to 201 (AKRPRTTITAKQLETLKSAYNTSPKPARHVREQLSSETGLDMRVVQVWFQNRRAKEKRLK) form a DNA-binding region, homeobox. The interval 197–383 (EKRLKKDAGR…WLDEVDHAQF (187 aa)) is disordered. Tyrosine 212 carries the post-translational modification Phosphotyrosine. Serine 223 is modified (phosphoserine). Low complexity predominate over residues 307 to 334 (PAALQSLPGPQPLLSSLVYPEAGLGLVP). Residues 335–344 (AGPPGGPPPM) are compositionally biased toward pro residues.

Interacts with POU1F1. At neuronal promoters, interacts with LDB1, in motor neurons LDB1 is displaced by ISL1 and a ternary complex is formed in which ISL1 contacts both LHX3 and LDB1; allosteric structural changes in the DNA binding domain of LHX3, induced by the ISL1-LHX3 interaction, may explain differences in sequence specificity of the different complexes. Interacts with LDB2. May interact with CITED2/MRG1.

It is found in the nucleus. Its function is as follows. Transcription factor. Recognizes and binds to the consensus sequence motif 5'-AATTAATTA-3' in the regulatory elements of target genes, such as glycoprotein hormones alpha chain CGA and visual system homeobox CHX10, positively modulating transcription; transcription can be co-activated by LDB2. Synergistically enhances transcription from the prolactin promoter in cooperation with POU1F1/Pit-1. Required for the establishment of the specialized cells of the pituitary gland and the nervous system. Involved in the development of interneurons and motor neurons in cooperation with LDB1 and ISL1. This Sus scrofa (Pig) protein is LIM/homeobox protein Lhx3 (LHX3).